The primary structure comprises 347 residues: Putative [LysW]-L-2-aminoadipate/[LysW]-L-glutamate phosphate reductase (347 aa).

NADP(+) is bound at residue S9–I12. Residue C149 is part of the active site. N314 provides a ligand contact to NADP(+).

The protein belongs to the NAGSA dehydrogenase family. Type 1 subfamily. LysY sub-subfamily.

Its subcellular location is the cytoplasm. It carries out the reaction [amino-group carrier protein]-C-terminal-N-(1-carboxy-5-oxopentan-1-yl)-L-glutamine + phosphate + NADP(+) = [amino-group carrier protein]-C-terminal-N-(1-carboxy-5-phosphooxy-5-oxopentan-1-yl)-L-glutamine + NADPH + H(+). The enzyme catalyses [amino-group carrier protein]-C-terminal-gamma-(L-glutamyl-5-semialdehyde)-L-glutamate + phosphate + NADP(+) = [amino-group carrier protein]-C-terminal-gamma-(5-phospho-L-glutamyl)-L-glutamate + NADPH + H(+). Its pathway is amino-acid biosynthesis; L-lysine biosynthesis via AAA pathway; L-lysine from L-alpha-aminoadipate (Thermus route): step 3/5. It functions in the pathway amino-acid biosynthesis; L-arginine biosynthesis. Involved in both the arginine and lysine biosynthetic pathways. In Picrophilus torridus (strain ATCC 700027 / DSM 9790 / JCM 10055 / NBRC 100828 / KAW 2/3), this protein is Putative [LysW]-L-2-aminoadipate/[LysW]-L-glutamate phosphate reductase.